The following is an 86-amino-acid chain: Large ribosomal subunit protein bL28 (86 aa).

The protein belongs to the bacterial ribosomal protein bL28 family.

In Phocaeicola vulgatus (strain ATCC 8482 / DSM 1447 / JCM 5826 / CCUG 4940 / NBRC 14291 / NCTC 11154) (Bacteroides vulgatus), this protein is Large ribosomal subunit protein bL28.